The chain runs to 394 residues: Elongation factor Tu (394 aa).

Positions 10-204 (KLHINVGTIG…VLDSYIPEPK (195 aa)) constitute a tr-type G domain. The interval 19–26 (GHVDHGKT) is G1. 19–26 (GHVDHGKT) lines the GTP pocket. Thr26 is a binding site for Mg(2+). The interval 60 to 64 (GITIN) is G2. A G3 region spans residues 81–84 (DCPG). GTP contacts are provided by residues 81–85 (DCPGH) and 136–139 (NKCD). The tract at residues 136 to 139 (NKCD) is G4. The interval 174-176 (SAL) is G5.

It belongs to the TRAFAC class translation factor GTPase superfamily. Classic translation factor GTPase family. EF-Tu/EF-1A subfamily. Monomer.

Its subcellular location is the cytoplasm. The enzyme catalyses GTP + H2O = GDP + phosphate + H(+). GTP hydrolase that promotes the GTP-dependent binding of aminoacyl-tRNA to the A-site of ribosomes during protein biosynthesis. The polypeptide is Elongation factor Tu (Baumannia cicadellinicola subsp. Homalodisca coagulata).